We begin with the raw amino-acid sequence, 328 residues long: Cytochrome f (328 aa).

The N-terminal stretch at 1-44 (MRTFNFLSFPQVHRQALVKAVLVAIATVSLLLTSDVINPQSAQA) is a signal peptide. Y45, C66, C69, and H70 together coordinate heme. A helical membrane pass occupies residues 294–314 (IKGLVLFLGGIMLCQILLVIK).

The protein belongs to the cytochrome f family. As to quaternary structure, the 4 large subunits of the cytochrome b6-f complex are cytochrome b6, subunit IV (17 kDa polypeptide, PetD), cytochrome f and the Rieske protein, while the 4 small subunits are PetG, PetL, PetM and PetN. The complex functions as a dimer. It depends on heme as a cofactor.

It localises to the cellular thylakoid membrane. Its function is as follows. Component of the cytochrome b6-f complex, which mediates electron transfer between photosystem II (PSII) and photosystem I (PSI), cyclic electron flow around PSI, and state transitions. The chain is Cytochrome f from Microcystis aeruginosa (strain NIES-843 / IAM M-2473).